A 239-amino-acid chain; its full sequence is DnaA regulatory inactivator Hda (239 aa).

The protein belongs to the DnaA family. HdA subfamily. The active form seems to be an ADP-bound monomer. Forms the RIDA complex (regulatory inactivation of DnaA) of ATP-DnaA, ADP-Hda and the DNA-loaded beta sliding clamp (dnaN).

Functionally, mediates the interaction of DNA replication initiator protein DnaA with DNA polymerase subunit beta sliding clamp (dnaN). Stimulates hydrolysis of ATP-DnaA to ADP-DnaA, rendering DnaA inactive for reinitiation, a process called regulatory inhibition of DnaA or RIDA. In Yersinia enterocolitica serotype O:8 / biotype 1B (strain NCTC 13174 / 8081), this protein is DnaA regulatory inactivator Hda.